Consider the following 250-residue polypeptide: Pyrroloquinoline-quinone synthase (250 aa).

It belongs to the PqqC family.

The enzyme catalyses 6-(2-amino-2-carboxyethyl)-7,8-dioxo-1,2,3,4,7,8-hexahydroquinoline-2,4-dicarboxylate + 3 O2 = pyrroloquinoline quinone + 2 H2O2 + 2 H2O + H(+). It participates in cofactor biosynthesis; pyrroloquinoline quinone biosynthesis. In terms of biological role, ring cyclization and eight-electron oxidation of 3a-(2-amino-2-carboxyethyl)-4,5-dioxo-4,5,6,7,8,9-hexahydroquinoline-7,9-dicarboxylic-acid to PQQ. In Xanthomonas oryzae pv. oryzae (strain PXO99A), this protein is Pyrroloquinoline-quinone synthase.